The sequence spans 185 residues: Elongation factor P (185 aa).

Belongs to the elongation factor P family.

Its subcellular location is the cytoplasm. It participates in protein biosynthesis; polypeptide chain elongation. Functionally, involved in peptide bond synthesis. Stimulates efficient translation and peptide-bond synthesis on native or reconstituted 70S ribosomes in vitro. Probably functions indirectly by altering the affinity of the ribosome for aminoacyl-tRNA, thus increasing their reactivity as acceptors for peptidyl transferase. The protein is Elongation factor P of Clostridium kluyveri (strain ATCC 8527 / DSM 555 / NBRC 12016 / NCIMB 10680 / K1).